A 388-amino-acid polypeptide reads, in one-letter code: MRYLTAGESHGPSLTAIIEGIPAGLTLHPADIDHELQRRQGGYGRGARMSIETDRVQISSGVRHGKTTGAPITLTVINKDHQKWLDVMAVGDIEETLKLKRRVKHPRPGHADLVGGIKYHFNDLRDALERSSARETTMRVAVGAVAKRILAELGIDMLHHILIFGGITITIPSKLSFRELQERALHSELSIVNPKQEKEIKTYIDKIKKEGDTIGGIIETIVQGVPAGLGSYVQWDKKLDAKLAQAVLSINAFKGVEFGVGFDMGFQKGSQVMDEITWTPTQGYGRQTNHLGGFEGGMTTGQPLVVKGVMKPIPTLYKPLMSVDIDSHEPYKATVERSDPTALPAAGVIMENVVATVLAKEILETFSSTTMSELQKAFSDYRAYVKQF.

Positions 39 and 45 each coordinate NADP(+). FMN contacts are provided by residues 130–132 (RSS), 251–252 (NA), Gly296, 311–315 (KPIPT), and Arg337.

It belongs to the chorismate synthase family. As to quaternary structure, homotetramer. The cofactor is FMNH2.

It catalyses the reaction 5-O-(1-carboxyvinyl)-3-phosphoshikimate = chorismate + phosphate. It functions in the pathway metabolic intermediate biosynthesis; chorismate biosynthesis; chorismate from D-erythrose 4-phosphate and phosphoenolpyruvate: step 7/7. In terms of biological role, catalyzes the anti-1,4-elimination of the C-3 phosphate and the C-6 proR hydrogen from 5-enolpyruvylshikimate-3-phosphate (EPSP) to yield chorismate, which is the branch point compound that serves as the starting substrate for the three terminal pathways of aromatic amino acid biosynthesis. This reaction introduces a second double bond into the aromatic ring system. The polypeptide is Chorismate synthase (Streptococcus pyogenes serotype M3 (strain SSI-1)).